The sequence spans 503 residues: Maturase K (503 aa).

Belongs to the intron maturase 2 family. MatK subfamily.

It is found in the plastid. The protein resides in the chloroplast. Usually encoded in the trnK tRNA gene intron. Probably assists in splicing its own and other chloroplast group II introns. The protein is Maturase K of Rosa carolina (Pasture rose).